A 358-amino-acid polypeptide reads, in one-letter code: MFDQLQSIKDRYKEIEKQLSDPGVISNQDKFRQLNKEYSGLSEIVKAYDEYRKAKDALQQSKELLYTESDPEMKELAQADYDEYSEKVPELEQQLKILLLPKEEADSRNAMVEIRAGAGGDEAALFAADLLRMYQRFAERNGWKCEVLDYNESSGLGGFKEATISLSGDDVYGTMKFESGVHRVQRVPETETQGRVHTSAASVAVLPEAEDFDIEIRKEDLQMDTYRSGGKGGQNVNKVETAVRITHVPSGIVVACQEERSQLQNRERAMKMLRSKLYDIKLAEQQKERADLRRSMVSTGDRSAKIRTYNFPQSRVTDHRIGFTTHALPQLLDGDLFEIIEALRVHDQTERLKAQVGA.

An N5-methylglutamine modification is found at Gln234.

This sequence belongs to the prokaryotic/mitochondrial release factor family. Post-translationally, methylated by PrmC. Methylation increases the termination efficiency of RF1.

Its subcellular location is the cytoplasm. Functionally, peptide chain release factor 1 directs the termination of translation in response to the peptide chain termination codons UAG and UAA. This Chloroherpeton thalassium (strain ATCC 35110 / GB-78) protein is Peptide chain release factor 1.